We begin with the raw amino-acid sequence, 210 residues long: Thiamine-phosphate synthase (210 aa).

Residues 38–42 and asparagine 70 each bind 4-amino-2-methyl-5-(diphosphooxymethyl)pyrimidine; that span reads QFREK. Mg(2+) contacts are provided by aspartate 71 and aspartate 90. Serine 107 serves as a coordination point for 4-amino-2-methyl-5-(diphosphooxymethyl)pyrimidine. 132-134 lines the 2-[(2R,5Z)-2-carboxy-4-methylthiazol-5(2H)-ylidene]ethyl phosphate pocket; that stretch reads TKT. Lysine 135 is a binding site for 4-amino-2-methyl-5-(diphosphooxymethyl)pyrimidine. 183–184 contacts 2-[(2R,5Z)-2-carboxy-4-methylthiazol-5(2H)-ylidene]ethyl phosphate; that stretch reads IS.

This sequence belongs to the thiamine-phosphate synthase family. Mg(2+) serves as cofactor.

It carries out the reaction 2-[(2R,5Z)-2-carboxy-4-methylthiazol-5(2H)-ylidene]ethyl phosphate + 4-amino-2-methyl-5-(diphosphooxymethyl)pyrimidine + 2 H(+) = thiamine phosphate + CO2 + diphosphate. The catalysed reaction is 2-(2-carboxy-4-methylthiazol-5-yl)ethyl phosphate + 4-amino-2-methyl-5-(diphosphooxymethyl)pyrimidine + 2 H(+) = thiamine phosphate + CO2 + diphosphate. It catalyses the reaction 4-methyl-5-(2-phosphooxyethyl)-thiazole + 4-amino-2-methyl-5-(diphosphooxymethyl)pyrimidine + H(+) = thiamine phosphate + diphosphate. The protein operates within cofactor biosynthesis; thiamine diphosphate biosynthesis; thiamine phosphate from 4-amino-2-methyl-5-diphosphomethylpyrimidine and 4-methyl-5-(2-phosphoethyl)-thiazole: step 1/1. Condenses 4-methyl-5-(beta-hydroxyethyl)thiazole monophosphate (THZ-P) and 2-methyl-4-amino-5-hydroxymethyl pyrimidine pyrophosphate (HMP-PP) to form thiamine monophosphate (TMP). This is Thiamine-phosphate synthase from Archaeoglobus fulgidus (strain ATCC 49558 / DSM 4304 / JCM 9628 / NBRC 100126 / VC-16).